The sequence spans 151 residues: Probable cGMP 3',5'-cyclic phosphodiesterase subunit delta (151 aa).

Belongs to the PDE6D/unc-119 family. As to quaternary structure, interacts with Pde6.

The protein resides in the nucleus. Its subcellular location is the cytoplasm. The protein is Probable cGMP 3',5'-cyclic phosphodiesterase subunit delta of Anopheles gambiae (African malaria mosquito).